A 104-amino-acid chain; its full sequence is ATP-dependent Clp protease adapter protein ClpS (104 aa).

Belongs to the ClpS family. Binds to the N-terminal domain of the chaperone ClpA.

In terms of biological role, involved in the modulation of the specificity of the ClpAP-mediated ATP-dependent protein degradation. This Paraburkholderia xenovorans (strain LB400) protein is ATP-dependent Clp protease adapter protein ClpS.